A 459-amino-acid chain; its full sequence is Ribulose bisphosphate carboxylase large chain (459 aa).

The residue at position 4 (Lys4) is an N6,N6,N6-trimethyllysine. Substrate is bound by residues Asn113 and Thr163. Lys165 acts as the Proton acceptor in catalysis. Residue Lys167 participates in substrate binding. Residues Lys191, Asp193, and Glu194 each coordinate Mg(2+). Residue Lys191 is modified to N6-carboxylysine. The active-site Proton acceptor is His284. The substrate site is built by Arg285, His317, and Ser369.

This sequence belongs to the RuBisCO large chain family. Type I subfamily. As to quaternary structure, heterohexadecamer of 8 large chains and 8 small chains; disulfide-linked. The disulfide link is formed within the large subunit homodimers. Requires Mg(2+) as cofactor. In terms of processing, the disulfide bond which can form in the large chain dimeric partners within the hexadecamer appears to be associated with oxidative stress and protein turnover.

It localises to the plastid. The protein resides in the chloroplast. It catalyses the reaction 2 (2R)-3-phosphoglycerate + 2 H(+) = D-ribulose 1,5-bisphosphate + CO2 + H2O. The enzyme catalyses D-ribulose 1,5-bisphosphate + O2 = 2-phosphoglycolate + (2R)-3-phosphoglycerate + 2 H(+). In terms of biological role, ruBisCO catalyzes two reactions: the carboxylation of D-ribulose 1,5-bisphosphate, the primary event in carbon dioxide fixation, as well as the oxidative fragmentation of the pentose substrate in the photorespiration process. Both reactions occur simultaneously and in competition at the same active site. This is Ribulose bisphosphate carboxylase large chain from Cephalotus follicularis (Albany pitcher plant).